A 1164-amino-acid chain; its full sequence is DNA-directed RNA polymerase 133 kDa polypeptide (1164 aa).

It belongs to the RNA polymerase beta chain family. The DNA-dependent RNA polymerase used for intermediate and late genes expression consists of eight subunits 147 kDa, 133 kDa, 35 kDa, 30 kDa, 22 kDa, 19 kDa, 18 kDa and 7 kDa totalling more than 500 kDa in mass. The same holoenzyme, with the addition of the transcription-specificity factor RAP94, is used for early gene expression.

Its subcellular location is the virion. It catalyses the reaction RNA(n) + a ribonucleoside 5'-triphosphate = RNA(n+1) + diphosphate. Functionally, part of the DNA-dependent RNA polymerase which catalyzes the transcription of viral DNA into RNA using the four ribonucleoside triphosphates as substrates. Responsible for the transcription of early, intermediate and late genes. DNA-dependent RNA polymerase associates with the early transcription factor (ETF), itself composed of D6 and A7, thereby allowing the early genes transcription. Late transcription, and probably also intermediate transcription, require newly synthesized RNA polymerase. This chain is DNA-directed RNA polymerase 133 kDa polypeptide (RPO132), found in Homo sapiens (Human).